The following is a 385-amino-acid chain: 8-amino-7-oxononanoate synthase (385 aa).

Arg-21 is a binding site for substrate. 108–109 (GF) is a pyridoxal 5'-phosphate binding site. A substrate-binding site is contributed by His-133. Pyridoxal 5'-phosphate is bound by residues Ser-179, His-207, and Thr-233. N6-(pyridoxal phosphate)lysine is present on Lys-236. Thr-352 contributes to the substrate binding site.

It belongs to the class-II pyridoxal-phosphate-dependent aminotransferase family. BioF subfamily. In terms of assembly, homodimer. The cofactor is pyridoxal 5'-phosphate.

It catalyses the reaction 6-carboxyhexanoyl-[ACP] + L-alanine + H(+) = (8S)-8-amino-7-oxononanoate + holo-[ACP] + CO2. Its pathway is cofactor biosynthesis; biotin biosynthesis. Its function is as follows. Catalyzes the decarboxylative condensation of pimeloyl-[acyl-carrier protein] and L-alanine to produce 8-amino-7-oxononanoate (AON), [acyl-carrier protein], and carbon dioxide. The protein is 8-amino-7-oxononanoate synthase of Salmonella schwarzengrund (strain CVM19633).